Here is a 234-residue protein sequence, read N- to C-terminus: Ubiquitin thioesterase OTUB2 (234 aa).

Positions 40–231 (TSIRKTKGDG…TSHYNILYAA (192 aa)) constitute an OTU domain. D48 is a catalytic residue. The active-site Nucleophile is the C51. Residues H205 and H224 contribute to the active site.

Belongs to the peptidase C65 family.

It carries out the reaction Thiol-dependent hydrolysis of ester, thioester, amide, peptide and isopeptide bonds formed by the C-terminal Gly of ubiquitin (a 76-residue protein attached to proteins as an intracellular targeting signal).. Functionally, hydrolase that can remove conjugated ubiquitin from proteins in vitro and may therefore play an important regulatory role at the level of protein turnover by preventing degradation. Mediates deubiquitination of 'Lys-11'-,'Lys-48'- and 'Lys-63'-linked polyubiquitin chains, with a preference for 'Lys-63'-linked polyubiquitin chains. The sequence is that of Ubiquitin thioesterase OTUB2 (Otub2) from Mus musculus (Mouse).